The sequence spans 132 residues: Guanyl-specific ribonuclease C2 (132 aa).

An N-terminal signal peptide occupies residues Met-1–Arg-26. 2 disulfide bridges follow: Cys-28-Cys-36 and Cys-32-Cys-129. The active site involves His-66. The active-site Proton acceptor is the Glu-84. His-118 (proton donor) is an active-site residue.

The protein belongs to the ribonuclease N1/T1 family.

It localises to the secreted. It catalyses the reaction [RNA] containing guanosine + H2O = an [RNA fragment]-3'-guanosine-3'-phosphate + a 5'-hydroxy-ribonucleotide-3'-[RNA fragment].. The sequence is that of Guanyl-specific ribonuclease C2 from Aspergillus clavatus (strain ATCC 1007 / CBS 513.65 / DSM 816 / NCTC 3887 / NRRL 1 / QM 1276 / 107).